We begin with the raw amino-acid sequence, 370 residues long: MTKHRVVVGLSGGVDSAVTAHLLKQQGHEVVGIFMKNWEDDDDSEFCSSRQDFLDAASVADVIGIEIEHVNFAAEYKDRVFAEFLREYQAGRTPNPDVLCNAEIKFKAFLDHAMRLGAEKIATGHYARVRQNPATGLFELLKGLDPSKDQSYFLHRLNQAQLSKTLFPVGDLHKTEVRRIAADIGLPNAKKKDSTGICFIGERPFREFLNRYIQHAPGPILDDRGRKLGRHVGLSFYTLGQRQGLGIGGVKEKGAQRGAGDHAPWFVARKELETNTLRVVQGHEHPWLLSHRLDAQDASWIAGHPPAAGACAAKTRYRQQDAACTVLAAQGDAFSLQFPEAQWAVTPGQSAVLYDGEVCLGGGVIAAVNG.

ATP-binding positions include 9–16 (GLSGGVDS) and M35. The interaction with target base in tRNA stretch occupies residues 95–97 (NPD). C100 functions as the Nucleophile in the catalytic mechanism. A disulfide bridge links C100 with C198. G124 contacts ATP. The interval 148–150 (KDQ) is interaction with tRNA. C198 acts as the Cysteine persulfide intermediate in catalysis. Residues 316–317 (RY) are interaction with tRNA.

This sequence belongs to the MnmA/TRMU family.

It is found in the cytoplasm. It catalyses the reaction S-sulfanyl-L-cysteinyl-[protein] + uridine(34) in tRNA + AH2 + ATP = 2-thiouridine(34) in tRNA + L-cysteinyl-[protein] + A + AMP + diphosphate + H(+). Its function is as follows. Catalyzes the 2-thiolation of uridine at the wobble position (U34) of tRNA, leading to the formation of s(2)U34. The protein is tRNA-specific 2-thiouridylase MnmA of Acidovorax ebreus (strain TPSY) (Diaphorobacter sp. (strain TPSY)).